We begin with the raw amino-acid sequence, 389 residues long: Very-long-chain 3-oxoacyl-CoA reductase (389 aa).

Residues 34–54 (IAVFLLAIGLFHVALKVVSYV) traverse the membrane as a helical segment. NADP(+) is bound by residues Val-80, Asp-134, Asn-162, Tyr-239, Lys-243, Val-272, and Ser-274. The active-site Proton donor is the Tyr-239. Catalysis depends on Lys-243, which acts as the Lowers pKa of active site Tyr. Residues 359-389 (QAAGGVADPKNTTAAREGYATESLKNETLKH) are disordered.

Belongs to the short-chain dehydrogenases/reductases (SDR) family.

The protein resides in the endoplasmic reticulum membrane. The enzyme catalyses a very-long-chain (3R)-3-hydroxyacyl-CoA + NADP(+) = a very-long-chain 3-oxoacyl-CoA + NADPH + H(+). Its pathway is lipid metabolism; fatty acid biosynthesis. Component of the microsomal membrane bound fatty acid elongation system, which produces the 26-carbon very long-chain fatty acids (VLCFA) from palmitate. Catalyzes the reduction of the 3-ketoacyl-CoA intermediate that is formed in each cycle of fatty acid elongation. VLCFAs serve as precursors for ceramide and sphingolipids. This is Very-long-chain 3-oxoacyl-CoA reductase from Yarrowia lipolytica (strain CLIB 122 / E 150) (Yeast).